We begin with the raw amino-acid sequence, 132 residues long: Small ribosomal subunit protein uS8 (132 aa).

This sequence belongs to the universal ribosomal protein uS8 family. Part of the 30S ribosomal subunit. Contacts proteins S5 and S12.

In terms of biological role, one of the primary rRNA binding proteins, it binds directly to 16S rRNA central domain where it helps coordinate assembly of the platform of the 30S subunit. In Syntrophobacter fumaroxidans (strain DSM 10017 / MPOB), this protein is Small ribosomal subunit protein uS8.